The following is a 478-amino-acid chain: Proline--tRNA ligase (478 aa).

The protein belongs to the class-II aminoacyl-tRNA synthetase family. ProS type 3 subfamily. As to quaternary structure, homodimer.

Its subcellular location is the cytoplasm. The enzyme catalyses tRNA(Pro) + L-proline + ATP = L-prolyl-tRNA(Pro) + AMP + diphosphate. In terms of biological role, catalyzes the attachment of proline to tRNA(Pro) in a two-step reaction: proline is first activated by ATP to form Pro-AMP and then transferred to the acceptor end of tRNA(Pro). This Methanococcoides burtonii (strain DSM 6242 / NBRC 107633 / OCM 468 / ACE-M) protein is Proline--tRNA ligase.